The chain runs to 121 residues: Large ribosomal subunit protein bL21 (121 aa).

The protein belongs to the bacterial ribosomal protein bL21 family. Part of the 50S ribosomal subunit. Contacts protein L20.

In terms of biological role, this protein binds to 23S rRNA in the presence of protein L20. The sequence is that of Large ribosomal subunit protein bL21 from Gloeobacter violaceus (strain ATCC 29082 / PCC 7421).